The primary structure comprises 913 residues: Protein SEY1 homolog (913 aa).

The Cytoplasmic portion of the chain corresponds to 1–825; the sequence is MTDVNKTQII…ETGGHMSLKN (825 aa). The GB1/RHD3-type G domain occupies 33–288; the sequence is GFNYNVIAIL…IPADGFAQYC (256 aa). 43-50 is a binding site for GTP; sequence GSQSSGKS. A helical transmembrane segment spans residues 826-846; that stretch reads VPFAFWVILLILGWNEILMFT. Residues 847–849 lie on the Lumenal side of the membrane; sequence RLF. A helical transmembrane segment spans residues 850–870; it reads FRLNIILPMLIGFIIIVISCL. The Cytoplasmic segment spans residues 871-913; sequence YTGNAQILSYINKIIFIVIKNLYNFYKHLQTIGHQTTKPEKVE.

It belongs to the TRAFAC class dynamin-like GTPase superfamily. GB1/RHD3 GTPase family. RHD3 subfamily.

It is found in the endoplasmic reticulum membrane. In terms of biological role, probable GTP-binding protein involved in generating and maintaining the structure of the tubular endoplasmic reticulum network. The chain is Protein SEY1 homolog from Plasmodium berghei (strain Anka).